The following is a 146-amino-acid chain: Large ribosomal subunit protein uL15 (146 aa).

A disordered region spans residues 1 to 65; it reads MSDIQLNTLK…GQMPLQRRLP (65 aa). Residues 24-34 show a composition bias toward gly residues; sequence RGIGSGLGKTA.

It belongs to the universal ribosomal protein uL15 family. In terms of assembly, part of the 50S ribosomal subunit.

In terms of biological role, binds to the 23S rRNA. In Bordetella parapertussis (strain 12822 / ATCC BAA-587 / NCTC 13253), this protein is Large ribosomal subunit protein uL15.